Here is a 291-residue protein sequence, read N- to C-terminus: Phosphate import ATP-binding protein PstB (291 aa).

The ABC transporter domain maps to 45–286 (YSTQNLDLWY…PADKQTEDYI (242 aa)). ATP is bound at residue 77-84 (GPSGCGKS).

It belongs to the ABC transporter superfamily. Phosphate importer (TC 3.A.1.7) family. The complex is composed of two ATP-binding proteins (PstB), two transmembrane proteins (PstC and PstA) and a solute-binding protein (PstS).

The protein localises to the cell membrane. It carries out the reaction phosphate(out) + ATP + H2O = ADP + 2 phosphate(in) + H(+). Its function is as follows. Part of the ABC transporter complex PstSACB involved in phosphate import. Responsible for energy coupling to the transport system. The chain is Phosphate import ATP-binding protein PstB from Staphylococcus epidermidis (strain ATCC 35984 / DSM 28319 / BCRC 17069 / CCUG 31568 / BM 3577 / RP62A).